The sequence spans 170 residues: MFLTSPFESCIVLSSLIAGLLFSLSTGFVGILGVFASLFETELSVSPKRLSLSSLSWPKTFWALLSSVEGVSWESSLFACIVGCCFAVTVIASLSASRVFGTVASSFRDSSCCCDSSPAVSVLATPATAALALLSLLLSLPCWSTSTEAFTVDPSPSVFSMLANRITIGL.

At 1 to 15 (MFLTSPFESCIVLSS) the chain is on the cytoplasmic side. The chain crosses the membrane as a helical span at residues 16–36 (LIAGLLFSLSTGFVGILGVFA). At 37 to 76 (SLFETELSVSPKRLSLSSLSWPKTFWALLSSVEGVSWESS) the chain is on the extracellular side. Residues 77-97 (LFACIVGCCFAVTVIASLSAS) traverse the membrane as a helical segment. Over 98–119 (RVFGTVASSFRDSSCCCDSSPA) the chain is Cytoplasmic. Residues 120–140 (VSVLATPATAALALLSLLLSL) form a helical membrane-spanning segment. At 141-170 (PCWSTSTEAFTVDPSPSVFSMLANRITIGL) the chain is on the extracellular side.

It localises to the membrane. This is an uncharacterized protein from Saccharomyces cerevisiae (strain ATCC 204508 / S288c) (Baker's yeast).